The sequence spans 557 residues: MFKSDIEIAQESKMKNIKNIAEKIGLTEEDIDLYGKYKCKISLDVLKRNKDKKDGKLILVTAINPTPAGEGKSTVTVGLGQALWKKNKKAVIALREPSLGPVFGIKGGAAGGGYSQVVPMEDINLHFTGDMHAITSANNLLAAAIDNHIHQGNILKIDQRRILFKRVMDMNDRALRNVIVALGGKINGFPREDGFMITVASEIMAILCLAEDLMDLKNKMGEILVAYSTEGKPIYCEDLEVQGAMALLMKDAIKPNLVQTLENTPAIIHGGPFANIAHGCNSILGTKMALKLGDYVITEAGFGADLGAEKFFDIKCRKANLKPNCVVIVATVRALKYNGGIPKENLKEQNMEALSKGIKNLGKHIENVNKFGVPAVVAINKFISDTEEEIEFIKKYCKELGAEVSIAEVWEKGGNGGLELADKVLDTIENKESKFNPIYEETLSIKQKIETIAEEIYGAEGVDYSKEAEKQISEIEKLDLDKKPVCMAKTQYSLSDDAKLLGRPCGFRINVKEVRISNGAGFIVVLTGNVMTMPGLPKKPAANNMNVLSDGNIVGLF.

66-73 is a binding site for ATP; that stretch reads TPAGEGKS.

This sequence belongs to the formate--tetrahydrofolate ligase family.

It carries out the reaction (6S)-5,6,7,8-tetrahydrofolate + formate + ATP = (6R)-10-formyltetrahydrofolate + ADP + phosphate. It functions in the pathway one-carbon metabolism; tetrahydrofolate interconversion. The protein is Formate--tetrahydrofolate ligase of Clostridium botulinum (strain ATCC 19397 / Type A).